The sequence spans 465 residues: CUGBP Elav-like family member 3 (465 aa).

RRM domains are found at residues 7 to 88 (IKLF…PADS) and 95 to 175 (RKLF…FADT). Positions 346–359 (PPALVAQQPPPPPQ) are enriched in pro residues. A disordered region spans residues 346–379 (PPALVAQQPPPPPQQQQQQQQQQQQQQQREGPDG). Over residues 360–373 (QQQQQQQQQQQQQQ) the composition is skewed to low complexity. One can recognise an RRM 3 domain in the interval 380 to 458 (CNIFIYHLPQ…KRLKVQLKRP (79 aa)).

Belongs to the CELF/BRUNOL family. In terms of tissue distribution, expressed in brain.

It localises to the nucleus. It is found in the cytoplasm. In terms of biological role, RNA-binding protein involved in the regulation of pre-mRNA alternative splicing. Mediates exon inclusion and/or exclusion in pre-mRNA that are subject to tissue-specific and developmentally regulated alternative splicing. Specifically activates exon 5 inclusion of cardiac isoforms of TNNT2 during heart remodeling at the juvenile to adult transition. Activates the splicing of MAPT/Tau exon 10. Binds to muscle-specific splicing enhancer (MSE) intronic sites flanking the alternative exon 5 of TNNT2 pre-mRNA. The protein is CUGBP Elav-like family member 3 (CELF3) of Homo sapiens (Human).